Here is a 417-residue protein sequence, read N- to C-terminus: Bifunctional thiamine biosynthesis protein ThiDN (417 aa).

Positions 1-235 are hydroxymethylpyrimidine/phosphomethylpyrimidine kinase; that stretch reads MVILAIGGYD…KSKFGYNSNP (235 aa). Gln-41 contacts 4-amino-5-hydroxymethyl-2-methylpyrimidine. The interval 236 to 417 is thiamine-phosphate synthase; that stretch reads TYINKEKVIK…VIQKIYNTLM (182 aa).

It in the N-terminal section; belongs to the ThiD family. The protein in the C-terminal section; belongs to the ThiN family.

It catalyses the reaction 4-amino-5-hydroxymethyl-2-methylpyrimidine + ATP = 4-amino-2-methyl-5-(phosphooxymethyl)pyrimidine + ADP + H(+). The catalysed reaction is 4-amino-2-methyl-5-(phosphooxymethyl)pyrimidine + ATP = 4-amino-2-methyl-5-(diphosphooxymethyl)pyrimidine + ADP. The enzyme catalyses 2-[(2R,5Z)-2-carboxy-4-methylthiazol-5(2H)-ylidene]ethyl phosphate + 4-amino-2-methyl-5-(diphosphooxymethyl)pyrimidine + 2 H(+) = thiamine phosphate + CO2 + diphosphate. It carries out the reaction 2-(2-carboxy-4-methylthiazol-5-yl)ethyl phosphate + 4-amino-2-methyl-5-(diphosphooxymethyl)pyrimidine + 2 H(+) = thiamine phosphate + CO2 + diphosphate. It catalyses the reaction 4-methyl-5-(2-phosphooxyethyl)-thiazole + 4-amino-2-methyl-5-(diphosphooxymethyl)pyrimidine + H(+) = thiamine phosphate + diphosphate. It participates in cofactor biosynthesis; thiamine diphosphate biosynthesis; 4-amino-2-methyl-5-diphosphomethylpyrimidine from 5-amino-1-(5-phospho-D-ribosyl)imidazole. The protein operates within cofactor biosynthesis; thiamine diphosphate biosynthesis; thiamine phosphate from 4-amino-2-methyl-5-diphosphomethylpyrimidine and 4-methyl-5-(2-phosphoethyl)-thiazole: step 1/1. Functionally, catalyzes the phosphorylation of hydroxymethylpyrimidine phosphate (HMP-P) to HMP-PP, and of HMP to HMP-P. Its function is as follows. Condenses 4-methyl-5-(beta-hydroxyethyl)thiazole monophosphate (THZ-P) and 4-amino-5-hydroxymethyl pyrimidine pyrophosphate (HMP-PP) to form thiamine monophosphate (TMP). This is Bifunctional thiamine biosynthesis protein ThiDN (thiDN) from Methanocaldococcus jannaschii (strain ATCC 43067 / DSM 2661 / JAL-1 / JCM 10045 / NBRC 100440) (Methanococcus jannaschii).